Reading from the N-terminus, the 427-residue chain is Histidinol dehydrogenase (427 aa).

NAD(+) contacts are provided by Tyr-127, Gln-185, and Asn-208. Residues Ser-232, Gln-254, and His-257 each contribute to the substrate site. Zn(2+)-binding residues include Gln-254 and His-257. Catalysis depends on proton acceptor residues Glu-321 and His-322. Positions 322, 355, 409, and 414 each coordinate substrate. Position 355 (Asp-355) interacts with Zn(2+). Residue His-414 participates in Zn(2+) binding.

This sequence belongs to the histidinol dehydrogenase family. The cofactor is Zn(2+).

The catalysed reaction is L-histidinol + 2 NAD(+) + H2O = L-histidine + 2 NADH + 3 H(+). Its pathway is amino-acid biosynthesis; L-histidine biosynthesis; L-histidine from 5-phospho-alpha-D-ribose 1-diphosphate: step 9/9. Its function is as follows. Catalyzes the sequential NAD-dependent oxidations of L-histidinol to L-histidinaldehyde and then to L-histidine. The protein is Histidinol dehydrogenase of Haemophilus influenzae (strain 86-028NP).